We begin with the raw amino-acid sequence, 1345 residues long: MPCPAQISDDLEFFVNGRKVTEKNVDPEVTLLAFLRKNLCLTGTKDACGTGGCGACTVMVSQHDPVCKKTRHFSVMACLVPLCSLHGAAVTTVEGVGSIKTRLHPVQERIAKSHGTQCGFCTPGMVMSIYTLLRNHPQPSEEQLMEALGGNLCRCTGYRPILESGRTFCMEPDGCPQKGTGQCCLDQKESDSSGSKSDICTKLFVKDEFQPLDPTQELIFPPELLRMAENPEKQTLTFYGERITWIAPGTLQELLVLKAKYPEAPLISGNTALGPAMKSQGHFYPVLLSPARIPDLRMVTKTSGGLTIGACCSLAQVKDILAESISELPQEKTQTYRALLKHLRSLAGQQIRNMASLGGHVISRHCYSDLNPILSVGNTTLNLLSEEGPRQIPLSGHFLAGLASADLKPEEILGSVYIPHSQKREFVSAFRQAQCHQNALPDVNAGMRVLFREGTDVIEELSIAYGGVGPTTVSAQRSCQQLLGRRWNALMLDEACRLLLDEVSLPGSALGGKVEFRRTLIVSLFFKFYLEVLQELKADQKLPPESTDSQRYPEIADRFLSSLGDFQVTLPRGVQTYQRVDSHQPLQDPVGRPIMHLSGLKHATGEAVFCDDIPRVDKELFMALVTSTRAHARIISIDSSEVLDLPGVVDVITAEDIPGNNGEEDDKLLAVDKVLCVGQVICAVVAETDVQAKRATEKIKITYEDLKPVIFTIEDAIKHNSFLCPEKKLEQGNIEEAFENVDQVAEGTVHVGGQEHFYMETQRVLVIPKTEDKELDMYVSTQDPAHVQKTVSSTLNIPISRITCHVKRVGGGFGGKVGRPAVFGAIAAVGAVKTGHPIRLVLDREDDMLITGGRHPLFAKYKVGFMNSGRIKALDIECYINGGCTLDDSELVTEFLVLKLENAYKIRNLRLRGRACMTNLPSNTAFRGFGFPQGALVTESCITAVAAKCGLPPEKIREKNMYKTVDKTIYKQAFNPDPLIRCWNECLDKSSFHIRRTRVDEFNKKSYWKKRGIAIVPMKFSVGFAATSYHQAAALVHIYTDGSVLVAHGGNELGQGIHTKMLQVASRELKIPLSYLHICETSTTTVPNTIATAASVGADVNGRAVQNACQILLKRLEPVIKKNPEGTWRDWIEAAFEKRISLSATGYFRGYKAFMDWEKGEGDPFPYYVYGAACSEVEIDCLTGAHKKIRTDIVMDACCSLNPAIDIGQIEGAFIQGMGLYTTEELLYSPEGVLYSRSPDKYKIPTVTDVPEQFNVSLLPSSQTPLTLYSSKGLGESGMFLGSSVFFAIVDAVAAARRQRDIAEDFTVKSPATPEWVRMACADRFTDMIPRDDPKTFKPWSIPIA.

Residues 9–96 (DDLEFFVNGR…GAAVTTVEGV (88 aa)) form the 2Fe-2S ferredoxin-type domain. Residues C48, C53, C56, and C78 each contribute to the [2Fe-2S] cluster site. Q117 contacts Mo-molybdopterin. Residues C118, C121, C153, and C155 each coordinate [2Fe-2S] cluster. Residue C155 participates in Mo-molybdopterin binding. One can recognise an FAD-binding PCMH-type domain in the interval 238–423 (FYGERITWIA…GSVYIPHSQK (186 aa)). FAD contacts are provided by residues 266 to 273 (LISGNTAL), A347, S356, H360, D369, and L413. Residues 812–813 (GF), 1094–1097 (ASVG), Q1209, and L1274 contribute to the Mo-molybdopterin site. Residue E1276 is the Proton acceptor; for azaheterocycle hydroxylase activity of the active site.

It belongs to the xanthine dehydrogenase family. As to quaternary structure, homodimer. Requires [2Fe-2S] cluster as cofactor. The cofactor is FAD. Mo-molybdopterin is required as a cofactor. In terms of tissue distribution, expressed in olfactory mucosa epithelium (at protein level). Detected in skin.

It localises to the cytoplasm. The catalysed reaction is an aldehyde + O2 + H2O = a carboxylate + H2O2 + H(+). In terms of biological role, oxidase with broad substrate specificity, oxidizing aromatic azaheterocycles, such as phthalazine, as well as aldehydes, such as benzaldehyde and retinal. Cannot use hypoxanthine as substrate. In Mus musculus (Mouse), this protein is Aldehyde oxidase 2 (Aox2).